The chain runs to 1178 residues: DNA-directed RNA polymerase subunit beta' (1178 aa).

4 residues coordinate Zn(2+): Cys60, Cys62, Cys75, and Cys78. Mg(2+) contacts are provided by Asp450, Asp452, and Asp454. Residues Cys795, Cys869, Cys876, and Cys879 each contribute to the Zn(2+) site.

Belongs to the RNA polymerase beta' chain family. As to quaternary structure, the RNAP catalytic core consists of 2 alpha, 1 beta, 1 beta' and 1 omega subunit. When a sigma factor is associated with the core the holoenzyme is formed, which can initiate transcription. Mg(2+) serves as cofactor. Zn(2+) is required as a cofactor.

The enzyme catalyses RNA(n) + a ribonucleoside 5'-triphosphate = RNA(n+1) + diphosphate. Its function is as follows. DNA-dependent RNA polymerase catalyzes the transcription of DNA into RNA using the four ribonucleoside triphosphates as substrates. This chain is DNA-directed RNA polymerase subunit beta', found in Clostridium botulinum (strain ATCC 19397 / Type A).